A 314-amino-acid chain; its full sequence is Cathepsin L 2 (314 aa).

An N-terminal signal peptide occupies residues 1–24 (MMLLGASLYLNNTQEVSDEIDTAN). The propeptide at 25–109 (LYANWKMKYN…NASNANFQYK (85 aa)) is activation peptide. 3 disulfide bridges follow: cysteine 132–cysteine 175, cysteine 166–cysteine 207, and cysteine 259–cysteine 302. Residue cysteine 135 is part of the active site. Active-site residues include histidine 265 and asparagine 282.

It belongs to the peptidase C1 family.

The protein resides in the secreted. The catalysed reaction is Specificity close to that of papain. As compared to cathepsin B, cathepsin L exhibits higher activity toward protein substrates, but has little activity on Z-Arg-Arg-NHMec, and no peptidyl-dipeptidase activity.. Its function is as follows. May be involved in extracellular digestion. The chain is Cathepsin L 2 from Paramecium tetraurelia.